The following is a 410-amino-acid chain: Peptidase T (410 aa).

H79 is a binding site for Zn(2+). The active site involves D81. D142 contacts Zn(2+). Catalysis depends on E176, which acts as the Proton acceptor. 3 residues coordinate Zn(2+): E177, D199, and H381.

It belongs to the peptidase M20B family. The cofactor is Zn(2+).

The protein resides in the cytoplasm. It catalyses the reaction Release of the N-terminal residue from a tripeptide.. In terms of biological role, cleaves the N-terminal amino acid of tripeptides. This chain is Peptidase T, found in Geobacillus sp. (strain WCH70).